We begin with the raw amino-acid sequence, 340 residues long: Glyceraldehyde-3-phosphate dehydrogenase (340 aa).

Residues 11 to 12 (TI) and G109 each bind NAD(+). 138–140 (SCN) contacts D-glyceraldehyde 3-phosphate. Residue C139 is the Nucleophile of the active site. R167 serves as a coordination point for NAD(+). 193-194 (HA) is a binding site for D-glyceraldehyde 3-phosphate. Q300 is an NAD(+) binding site.

Belongs to the glyceraldehyde-3-phosphate dehydrogenase family. Homotetramer.

The protein resides in the cytoplasm. It carries out the reaction D-glyceraldehyde 3-phosphate + phosphate + NADP(+) = (2R)-3-phospho-glyceroyl phosphate + NADPH + H(+). The enzyme catalyses D-glyceraldehyde 3-phosphate + phosphate + NAD(+) = (2R)-3-phospho-glyceroyl phosphate + NADH + H(+). It functions in the pathway carbohydrate degradation; glycolysis; pyruvate from D-glyceraldehyde 3-phosphate: step 1/5. The polypeptide is Glyceraldehyde-3-phosphate dehydrogenase (Saccharolobus islandicus (strain L.S.2.15 / Lassen #1) (Sulfolobus islandicus)).